The following is a 229-amino-acid chain: Large ribosomal subunit protein uL1 (229 aa).

This sequence belongs to the universal ribosomal protein uL1 family. In terms of assembly, part of the 50S ribosomal subunit.

Its function is as follows. Binds directly to 23S rRNA. The L1 stalk is quite mobile in the ribosome, and is involved in E site tRNA release. Functionally, protein L1 is also a translational repressor protein, it controls the translation of the L11 operon by binding to its mRNA. This chain is Large ribosomal subunit protein uL1, found in Clostridium acetobutylicum (strain ATCC 824 / DSM 792 / JCM 1419 / IAM 19013 / LMG 5710 / NBRC 13948 / NRRL B-527 / VKM B-1787 / 2291 / W).